We begin with the raw amino-acid sequence, 1033 residues long: Integrin alpha-IIb (1033 aa).

The N-terminal stretch at 1 to 31 (MARASCAWHSLWLLQWTPLFLGPSAVPPVWA) is a signal peptide. Over 32–988 (LNLDSEKFSV…TQLLRALEER (957 aa)) the chain is Extracellular. FG-GAP repeat units follow at residues 35-96 (DSEK…GGKC), 109-173 (NLGF…GRAE), 184-237 (SVYA…ISSY), 252-304 (TYDN…DSYY), 305-370 (QPLH…PQAL), 372-431 (TPTL…GLSP), and 434-495 (SQVL…VQDS). N-linked (GlcNAc...) asparagine glycosylation is found at N46 and N75. 3 disulfide bridges follow: C87–C96, C138–C161, and C177–C197. The Ca(2+) site is built by E273, D275, D277, T280, E282, D327, N329, D331, R333, D335, D395, D399, Y401, D403, D456, D458, N460, Y462, and D464. Disulfide bonds link C503–C514 and C520–C575. A glycan (N-linked (GlcNAc...) asparagine) is linked at N600. Cystine bridges form between C632-C638, C704-C717, C856-C916, and C905-C911. N-linked (GlcNAc...) asparagine glycosylation is present at N710. N957 carries N-linked (GlcNAc...) asparagine glycosylation. Residues 989-1014 (AIPVWWVLVGVLGGLLLLTLLVLAMW) traverse the membrane as a helical segment. Over 1015–1033 (KAGFFKRNRPPLEEDEEEE) the chain is Cytoplasmic. Residues 1017-1021 (GFFKR) carry the GFFKR motif motif.

The protein belongs to the integrin alpha chain family. Heterodimer of an alpha and a beta subunit. The alpha subunit is composed of a heavy and a light chain linked by a disulfide bond. Alpha-IIb associates with beta-3. Directly interacts with RNF181. Interacts (via C-terminus cytoplasmic tail region) with CIB1; the interaction is direct and calcium-dependent. Interacts (via C-terminus cytoplasmic tail region) with CIB2, CIB3 and CIB4; the interactions are stabilized/increased in a calcium and magnesium-dependent manner. ITGA2B:ITGB3 interacts with PPIA/CYPA; the interaction is ROS and PPIase activity-dependent and is increased in the presence of thrombin. ITGA2B:ITGB3 interacts with SELP (via C-type lectin domain); the interaction mediates cell-cell interaction and adhesion. Cleaved by ELANE; the cleavage promotes activation of platelet fibrinogen receptor integrin alpha-IIb/beta-3.

Its subcellular location is the membrane. Integrin alpha-IIb/beta-3 is a receptor for fibronectin, fibrinogen, plasminogen, prothrombin, thrombospondin and vitronectin. It recognizes the sequence R-G-D in a wide array of ligands. It recognizes the sequence H-H-L-G-G-G-A-K-Q-A-G-D-V in fibrinogen gamma chain. Following activation integrin alpha-IIb/beta-3 brings about platelet/platelet interaction through binding of soluble fibrinogen. This step leads to rapid platelet aggregation which physically plugs ruptured endothelial cell surface. The chain is Integrin alpha-IIb (Itga2b) from Mus musculus (Mouse).